The chain runs to 755 residues: Sentrin-specific protease 5 (755 aa).

A disordered region spans residues 268–321 (VQKVTGDHQETRRENGEGGSCSPFPSPEPKDPSCRHQPYFPDMDSSAVVKGTNS). Over residues 272–283 (TGDHQETRRENG) the composition is skewed to basic and acidic residues. The interval 567 to 724 (HMLDMDDLAT…VFVLQYCKCL (158 aa)) is protease. Residues His646, Asp663, and Cys713 contribute to the active site.

The protein belongs to the peptidase C48 family. Interacts with CCAR2.

It is found in the nucleus. The protein resides in the nucleolus. Functionally, protease that catalyzes two essential functions in the SUMO pathway: processing of full-length SUMO3 to its mature form and deconjugation of SUMO2 and SUMO3 from targeted proteins. Has weak proteolytic activity against full-length SUMO1 or SUMO1 conjugates. Required for cell division. The sequence is that of Sentrin-specific protease 5 (SENP5) from Homo sapiens (Human).